A 250-amino-acid polypeptide reads, in one-letter code: Endonuclease NucS (250 aa).

The protein belongs to the NucS endonuclease family.

It is found in the cytoplasm. Functionally, cleaves both 3' and 5' ssDNA extremities of branched DNA structures. The chain is Endonuclease NucS from Sulfolobus acidocaldarius (strain ATCC 33909 / DSM 639 / JCM 8929 / NBRC 15157 / NCIMB 11770).